Here is a 182-residue protein sequence, read N- to C-terminus: NADH-quinone oxidoreductase subunit I (182 aa).

2 consecutive 4Fe-4S ferredoxin-type domains span residues Leu52 to Ala82 and Asp92 to Asp121. Cys62, Cys65, Cys68, Cys72, Cys101, Cys104, Cys107, and Cys111 together coordinate [4Fe-4S] cluster.

This sequence belongs to the complex I 23 kDa subunit family. In terms of assembly, NDH-1 is composed of 13 different subunits. Subunits NuoA, H, J, K, L, M, N constitute the membrane sector of the complex. It depends on [4Fe-4S] cluster as a cofactor.

It localises to the cell inner membrane. It catalyses the reaction a quinone + NADH + 5 H(+)(in) = a quinol + NAD(+) + 4 H(+)(out). NDH-1 shuttles electrons from NADH, via FMN and iron-sulfur (Fe-S) centers, to quinones in the respiratory chain. The immediate electron acceptor for the enzyme in this species is believed to be ubiquinone. Couples the redox reaction to proton translocation (for every two electrons transferred, four hydrogen ions are translocated across the cytoplasmic membrane), and thus conserves the redox energy in a proton gradient. This chain is NADH-quinone oxidoreductase subunit I, found in Pseudomonas savastanoi pv. phaseolicola (strain 1448A / Race 6) (Pseudomonas syringae pv. phaseolicola (strain 1448A / Race 6)).